Consider the following 612-residue polypeptide: Zinc metalloproteinase-disintegrin-like HV1 (612 aa).

The signal sequence occupies residues 1–20; the sequence is MIQVLLVTICLAVFPYQGSS. Residues 21 to 188 constitute a propeptide that is removed on maturation; sequence IILESGNVND…SIKEDSQSNL (168 aa). Positions 200–396 constitute a Peptidase M12B domain; it reads KYVKFFLVAD…NMPQCILKKP (197 aa). N-linked (GlcNAc...) asparagine glycosylation occurs at asparagine 219. Disulfide bonds link cysteine 311–cysteine 391, cysteine 351–cysteine 375, and cysteine 353–cysteine 358. Histidine 336 serves as a coordination point for Zn(2+). The active site involves glutamate 337. Residues histidine 340 and histidine 346 each contribute to the Zn(2+) site. In terms of domain architecture, Disintegrin spans 404 to 489; that stretch reads PPVCGNYFVE…AECTDRFQRN (86 aa). Residues valine 406, asparagine 409, phenylalanine 411, glutamate 413, glutamate 416, and aspartate 419 each coordinate Ca(2+). 14 cysteine pairs are disulfide-bonded: cysteine 407–cysteine 436, cysteine 418–cysteine 431, cysteine 420–cysteine 426, cysteine 430–cysteine 453, cysteine 444–cysteine 450, cysteine 449–cysteine 475, cysteine 462–cysteine 482, cysteine 469–cysteine 500, cysteine 493–cysteine 505, cysteine 512–cysteine 562, cysteine 527–cysteine 573, cysteine 540–cysteine 550, cysteine 557–cysteine 599, and cysteine 593–cysteine 605. Residues 468–470 carry the D/ECD-tripeptide motif; sequence ECD. Ca(2+) contacts are provided by aspartate 470, methionine 471, aspartate 473, aspartate 484, and arginine 485. Asparagine 502 is a glycosylation site (N-linked (GlcNAc...) asparagine). Asparagine 609 carries N-linked (GlcNAc...) asparagine glycosylation.

It belongs to the venom metalloproteinase (M12B) family. P-III subfamily. P-IIIc sub-subfamily. Homodimer; disulfide-linked. The cofactor is Zn(2+). In terms of tissue distribution, expressed by the venom gland.

The protein localises to the secreted. Its activity is regulated as follows. Inhibited by EDTA and EGTA. Snake venom zinc metalloproteinase-disintegrin-like that potently activates prothrombin (F2). Does not elicit any hemorrhagic response. Barely inhibits collagen-induced platelet aggregation. Hydrolyzes the alpha-chain of fibrin and fibrinogen (FGA), without affecting the Bbeta- and gamma-chains. Induces apoptosis in cultured vascular endothelial cells. This chain is Zinc metalloproteinase-disintegrin-like HV1, found in Protobothrops flavoviridis (Habu).